A 430-amino-acid chain; its full sequence is Solanesyl-diphosphate synthase 1, mitochondrial (430 aa).

Residues 1-31 (MSWRWALARRVAALGATSGGGDGATAQAQRL) constitute a mitochondrion transit peptide. Lysine 133, arginine 136, and histidine 182 together coordinate isopentenyl diphosphate. Residues aspartate 189 and aspartate 193 each coordinate Mg(2+). Position 198 (arginine 198) interacts with an all-trans-polyprenyl diphosphate. Residue arginine 199 participates in isopentenyl diphosphate binding. The an all-trans-polyprenyl diphosphate site is built by lysine 275, threonine 276, glutamine 313, and lysine 330.

Belongs to the FPP/GGPP synthase family. In terms of assembly, homodimer. Mg(2+) is required as a cofactor. As to expression, expressed in leaves, stems and roots. Highest expression in roots.

It localises to the mitochondrion. It catalyses the reaction 7 isopentenyl diphosphate + (2E)-geranyl diphosphate = all-trans-nonaprenyl diphosphate + 7 diphosphate. It participates in cofactor biosynthesis; ubiquinone biosynthesis. Its function is as follows. Involved in the supply of solanesyl diphosphate for ubiquinone-9 (UQ-9) biosynthesis in mitochondria. Farnesyl diphosphate is the preferred substrate. The polypeptide is Solanesyl-diphosphate synthase 1, mitochondrial (Oryza sativa subsp. japonica (Rice)).